Consider the following 255-residue polypeptide: uncharacterized protein (255 aa).

Residues Asn16 and Asn58 are each glycosylated (N-linked (GlcNAc...) asparagine; by host). 2 helical membrane-spanning segments follow: residues 72–92 (LIYS…TIYY) and 104–124 (LWYI…SHIC).

The protein resides in the membrane. This is an uncharacterized protein from Acanthamoeba polyphaga (Amoeba).